Reading from the N-terminus, the 239-residue chain is tRNA (guanine-N(1)-)-methyltransferase (239 aa).

Residues glycine 108 and leucine 127–leucine 132 contribute to the S-adenosyl-L-methionine site.

Belongs to the RNA methyltransferase TrmD family. As to quaternary structure, homodimer.

It localises to the cytoplasm. The catalysed reaction is guanosine(37) in tRNA + S-adenosyl-L-methionine = N(1)-methylguanosine(37) in tRNA + S-adenosyl-L-homocysteine + H(+). In terms of biological role, specifically methylates guanosine-37 in various tRNAs. This Streptococcus thermophilus (strain ATCC BAA-250 / LMG 18311) protein is tRNA (guanine-N(1)-)-methyltransferase.